A 462-amino-acid chain; its full sequence is Multidrug resistance protein NorM (462 aa).

The next 11 membrane-spanning stretches (helical) occupy residues 56–76 (LAAG…LQGV), 99–119 (IYWT…VALS), 147–167 (FAAL…PAIG), 172–192 (LLWV…GLIH), 202–222 (FLGS…ALIW), 247–267 (LIGI…LFLA), 280–300 (LAAH…PLAI), 325–345 (FVAL…LILA), 361–381 (NAAT…FQIV), 402–422 (MLAA…WLAF), and 430–450 (GLWW…AWRF).

It belongs to the multi antimicrobial extrusion (MATE) (TC 2.A.66.1) family.

The protein localises to the cell inner membrane. Functionally, multidrug efflux pump. Confers probably resistance to the cationic peptide polymyxin B (PMB). This chain is Multidrug resistance protein NorM (norM), found in Burkholderia vietnamiensis.